Here is a 688-residue protein sequence, read N- to C-terminus: Polyribonucleotide nucleotidyltransferase (688 aa).

Mg(2+) is bound by residues Asp484 and Asp490. The 60-residue stretch at 550 to 609 (PTTEIFNVAPDKIVEIIGQGGRVIKEIVEKFEVKIDLNKPSGEVKIMGNKERVLKTKEFI) folds into the KH domain. An S1 motif domain is found at 626 to 688 (DEVLEAQVKR…NKGKIALDLA (63 aa)).

It belongs to the polyribonucleotide nucleotidyltransferase family. Requires Mg(2+) as cofactor.

The protein localises to the cytoplasm. The enzyme catalyses RNA(n+1) + phosphate = RNA(n) + a ribonucleoside 5'-diphosphate. Involved in mRNA degradation. Catalyzes the phosphorolysis of single-stranded polyribonucleotides processively in the 3'- to 5'-direction. This is Polyribonucleotide nucleotidyltransferase from Helicobacter pylori (strain HPAG1).